The chain runs to 427 residues: Mitogen-activated protein kinase 8 (427 aa).

Residues 26-321 (YQNLKPIGSG…VDEALQHPYI (296 aa)) form the Protein kinase domain. ATP is bound by residues 32–40 (IGSGAQGIV) and lysine 55. Cysteine 116 bears the S-nitrosocysteine mark. Aspartate 151 acts as the Proton acceptor in catalysis. The residue at position 183 (threonine 183) is a Phosphothreonine; by MAP2K7. A TXY motif is present at residues 183-185 (TPY). At tyrosine 185 the chain carries Phosphotyrosine; by MAP2K4. 2 positions are modified to phosphoserine: methionine 301 and serine 377. The tract at residues 371–427 (VIRGQPSPLGAAVINGSQHPSSSSSVNDVSSMSTDPTLASDTDSSLEAAAGPLGCCR) is disordered. The span at 387–403 (SQHPSSSSSVNDVSSMS) shows a compositional bias: low complexity. The span at 404–415 (TDPTLASDTDSS) shows a compositional bias: polar residues.

Belongs to the protein kinase superfamily. CMGC Ser/Thr protein kinase family. MAP kinase subfamily. Forms a complex with MAPK8IP1 and ARHGEF28. Found in a complex with SH3RF1, RAC1, MAP3K11/MLK3, MAP2K7/MKK7 and MAPK8IP1/JIP1. Found in a complex with SH3RF1, RAC2, MAP3K7/TAK1, MAP2K7/MKK7, MAPK8IP1/JIP1 and MAPK9/JNK2. Binds to at least four scaffolding proteins, MAPK8IP1/JIP-1, MAPK8IP2/JIP-2, MAPK8IP3/JIP-3/JSAP1 and SPAG9/MAPK8IP4/JIP-4. These proteins also bind other components of the JNK signaling pathway. Interacts with TP53 and WWOX. Interacts with JAMP. Interacts with HSF1 (via D domain and preferentially with hyperphosphorylated form); this interaction occurs under both normal growth conditions and immediately upon heat shock. Interacts (phosphorylated form) with NFE2; the interaction phosphorylates NFE2 in undifferentiated cells. Interacts with NFATC4. Interacts with MECOM; regulates JNK signaling. Interacts with PIN1; this interaction mediates MAPK8 conformational changes leading to the binding of MAPK8 to its substrates. Interacts with GRIPAP1. Interacts with POU5F1; phosphorylates POU5F1 at 'Ser-355'. Interacts with STMN2, STMN3 and STMN4. Interacts with HSF4. It depends on Mg(2+) as a cofactor. Post-translationally, dually phosphorylated on Thr-183 and Tyr-185 by MAP2K7 and MAP2K4, which activates the enzyme. Phosphorylated by TAOK2. May be phosphorylated at Thr-183 and Tyr-185 by MAP3K1/MEKK1. Phosphorylated form is more concentrated at synapses than none-phosphorylated.

Its subcellular location is the cytoplasm. It localises to the nucleus. The protein resides in the synapse. It catalyses the reaction L-seryl-[protein] + ATP = O-phospho-L-seryl-[protein] + ADP + H(+). The enzyme catalyses L-threonyl-[protein] + ATP = O-phospho-L-threonyl-[protein] + ADP + H(+). Its activity is regulated as follows. Activated by threonine and tyrosine phosphorylation by either of two dual specificity kinases, MAP2K4 and MAP2K7. MAP2K4 shows a strong preference for Tyr-185 while MAP2K7 phosphorylates Tyr-183 preferentially. Inhibited by dual specificity phosphatases, such as DUSP1. Inhibited by SERPINB3. In terms of biological role, serine/threonine-protein kinase involved in various processes such as cell proliferation, differentiation, migration, transformation and programmed cell death. Extracellular stimuli such as pro-inflammatory cytokines or physical stress stimulate the stress-activated protein kinase/c-Jun N-terminal kinase (SAP/JNK) signaling pathway. In this cascade, two dual specificity kinases MAP2K4/MKK4 and MAP2K7/MKK7 phosphorylate and activate MAPK8/JNK1. In turn, MAPK8/JNK1 phosphorylates a number of transcription factors, primarily components of AP-1 such as JUN, JDP2 and ATF2 and thus regulates AP-1 transcriptional activity. Phosphorylates the replication licensing factor CDT1, inhibiting the interaction between CDT1 and the histone H4 acetylase HBO1 to replication origins. Loss of this interaction abrogates the acetylation required for replication initiation. Promotes stressed cell apoptosis by phosphorylating key regulatory factors including p53/TP53 and Yes-associates protein YAP1. In T-cells, MAPK8 and MAPK9 are required for polarized differentiation of T-helper cells into Th1 cells. Contributes to the survival of erythroid cells by phosphorylating the antagonist of cell death BAD upon EPO stimulation. Mediates starvation-induced BCL2 phosphorylation, BCL2 dissociation from BECN1, and thus activation of autophagy. Phosphorylates STMN2 and hence regulates microtubule dynamics, controlling neurite elongation in cortical neurons. In the developing brain, through its cytoplasmic activity on STMN2, negatively regulates the rate of exit from multipolar stage and of radial migration from the ventricular zone. Phosphorylates several other substrates including heat shock factor protein 4 (HSF4), the deacetylase SIRT1, ELK1, or the E3 ligase ITCH. Phosphorylates the CLOCK-BMAL1 heterodimer and plays a role in the regulation of the circadian clock. Phosphorylates the heat shock transcription factor HSF1, suppressing HSF1-induced transcriptional activity. Phosphorylates POU5F1, which results in the inhibition of POU5F1's transcriptional activity and enhances its proteasomal degradation. Phosphorylates JUND and this phosphorylation is inhibited in the presence of MEN1. In neurons, phosphorylates SYT4 which captures neuronal dense core vesicles at synapses. Phosphorylates EIF4ENIF1/4-ET in response to oxidative stress, promoting P-body assembly. Phosphorylates SIRT6 in response to oxidative stress, stimulating its mono-ADP-ribosyltransferase activity. Phosphorylates NLRP3, promoting assembly of the NLRP3 inflammasome. Phosphorylates ALKBH5 in response to reactive oxygen species (ROS), promoting ALKBH5 sumoylation and inactivation. Its function is as follows. JNK1 isoforms display different binding patterns: beta-1 preferentially binds to c-Jun, whereas alpha-1, alpha-2, and beta-2 have a similar low level of binding to both c-Jun or ATF2. However, there is no correlation between binding and phosphorylation, which is achieved at about the same efficiency by all isoforms. In Homo sapiens (Human), this protein is Mitogen-activated protein kinase 8 (MAPK8).